The sequence spans 158 residues: RNA pyrophosphohydrolase (158 aa).

One can recognise a Nudix hydrolase domain in the interval 9–151; sequence PLRNGVGIVV…KLHVYKDVKE (143 aa). The Nudix box motif lies at 43–64; that stretch reads GGVDKGEDYLTAAYRELEEETS.

This sequence belongs to the Nudix hydrolase family. RppH subfamily. It depends on a divalent metal cation as a cofactor.

In terms of biological role, accelerates the degradation of transcripts by removing pyrophosphate from the 5'-end of triphosphorylated RNA, leading to a more labile monophosphorylated state that can stimulate subsequent ribonuclease cleavage. The protein is RNA pyrophosphohydrolase of Pelagibacter ubique (strain HTCC1062).